We begin with the raw amino-acid sequence, 616 residues long: Hemagglutinin-neuraminidase (616 aa).

The Intravirion portion of the chain corresponds to 1–26 (MDRAVSQVALENDEREAKNTWRLVFR). Residues 27–47 (IAILLLTVVTLAISAAALAYS) form a helical membrane-spanning segment. Topologically, residues 48 to 616 (MEASTPSDLV…ELESYAASWP (569 aa)) are virion surface. A glycan (N-linked (GlcNAc...) asparagine; by host) is linked at asparagine 119. Positions 124-152 (GAPIHDPDYIGGIGKELIVDDASDVTSFY) are important for interaction with fusion/F protein. 3 disulfide bridges follow: cysteine 172–cysteine 196, cysteine 186–cysteine 247, and cysteine 238–cysteine 251. Positions 234–239 (NRKSCS) are involved in neuraminidase activity. Residues asparagine 341 and asparagine 433 are each glycosylated (N-linked (GlcNAc...) asparagine; by host). Cystine bridges form between cysteine 344-cysteine 461 and cysteine 455-cysteine 465. 3 N-linked (GlcNAc...) asparagine; by host glycosylation sites follow: asparagine 481, asparagine 538, and asparagine 600. A disulfide bond links cysteine 531 and cysteine 542.

It belongs to the paramyxoviruses hemagglutinin-neuraminidase family. Homotetramer; composed of disulfide-linked homodimers. Interacts with F protein trimer. Interacts with host CG-1B; this interaction inhibits viral adsorption and replication rather than internalization.

It localises to the virion membrane. The protein localises to the host cell membrane. The enzyme catalyses Hydrolysis of alpha-(2-&gt;3)-, alpha-(2-&gt;6)-, alpha-(2-&gt;8)- glycosidic linkages of terminal sialic acid residues in oligosaccharides, glycoproteins, glycolipids, colominic acid and synthetic substrates.. In terms of biological role, mediates the viral entry into the host cell together with fusion/F protein. Attaches the virus to sialic acid-containing cell receptors and thereby initiates infection. Binding of HN protein to the receptor induces a conformational change that allows the F protein to trigger virion/cell membranes fusion. Functionally, neuraminidase activity ensures the efficient spread of the virus by dissociating the mature virions from the neuraminic acid containing glycoproteins. This chain is Hemagglutinin-neuraminidase (HN), found in Gallus gallus (Chicken).